Here is a 270-residue protein sequence, read N- to C-terminus: Protein US2 homolog (270 aa).

This sequence belongs to the herpesviridae US2 family.

In Gallid herpesvirus 2 (strain Chicken/Md5/ATCC VR-987) (GaHV-2), this protein is Protein US2 homolog (MDV091).